The primary structure comprises 122 residues: Large ribosomal subunit protein uL14 (122 aa).

It belongs to the universal ribosomal protein uL14 family. In terms of assembly, part of the 50S ribosomal subunit. Forms a cluster with proteins L3 and L19. In the 70S ribosome, L14 and L19 interact and together make contacts with the 16S rRNA in bridges B5 and B8.

Functionally, binds to 23S rRNA. Forms part of two intersubunit bridges in the 70S ribosome. This Bacillus anthracis (strain A0248) protein is Large ribosomal subunit protein uL14.